A 290-amino-acid chain; its full sequence is Porphobilinogen deaminase (290 aa).

Cysteine 238 bears the S-(dipyrrolylmethanemethyl)cysteine mark.

The protein belongs to the HMBS family. In terms of assembly, monomer. Dipyrromethane serves as cofactor.

The enzyme catalyses 4 porphobilinogen + H2O = hydroxymethylbilane + 4 NH4(+). Its pathway is porphyrin-containing compound metabolism; protoporphyrin-IX biosynthesis; coproporphyrinogen-III from 5-aminolevulinate: step 2/4. Its function is as follows. Tetrapolymerization of the monopyrrole PBG into the hydroxymethylbilane pre-uroporphyrinogen in several discrete steps. The polypeptide is Porphobilinogen deaminase (Caldicellulosiruptor saccharolyticus (strain ATCC 43494 / DSM 8903 / Tp8T 6331)).